Here is an 87-residue protein sequence, read N- to C-terminus: Conotoxin Ca6.2 (87 aa).

The N-terminal stretch at 1–19 (MHTLEMLLLVLLLVPLAPG) is a signal peptide. The propeptide occupies 20–52 (EGDGQAVGGDRNPSEARRAYKRLLQRPARRMDR). 3 disulfides stabilise this stretch: Cys55-Cys64, Cys58-Cys70, and Cys63-Cys84.

The protein belongs to the conotoxin Q superfamily. As to expression, expressed by the venom duct.

It localises to the secreted. This Conus caracteristicus (Characteristic cone) protein is Conotoxin Ca6.2.